The chain runs to 180 residues: GTP cyclohydrolase 1 (180 aa).

Cysteine 71, histidine 74, and cysteine 142 together coordinate Zn(2+).

This sequence belongs to the GTP cyclohydrolase I family. Toroid-shaped homodecamer, composed of two pentamers of five dimers.

It carries out the reaction GTP + H2O = 7,8-dihydroneopterin 3'-triphosphate + formate + H(+). It participates in cofactor biosynthesis; 7,8-dihydroneopterin triphosphate biosynthesis; 7,8-dihydroneopterin triphosphate from GTP: step 1/1. The chain is GTP cyclohydrolase 1 (folE) from Helicobacter pylori (strain ATCC 700392 / 26695) (Campylobacter pylori).